The chain runs to 408 residues: Hepatocyte nuclear factor 4-gamma (408 aa).

A DNA-binding region (nuclear receptor) is located at residues 9-84 (NCLCAICGDR…AGMKKEAVQN (76 aa)). NR C4-type zinc fingers lie at residues 12-32 (CAICGDRATGKHYGASSCDGC) and 48-72 (CRFSRQCVVDKDKRNQCRYCRLRKC). Phosphoserine is present on serine 94. The 230-residue stretch at 99–328 (SNIPSINTLA…NLLQEMLLGG (230 aa)) folds into the NR LBD domain. Positions 368-390 (ISTPETPLPSPPQGSGQEQYKIA) are disordered. 2 positions are modified to phosphothreonine: threonine 370 and threonine 373. Serine 377 is subject to Phosphoserine.

It belongs to the nuclear hormone receptor family. NR2 subfamily. As to expression, expressed in pancreas, kidney, small intestine and testis. Weakly expressed in colon. Not expressed in liver, skeletal muscle, lung, placenta, brain, heart, peripheral blood, ovary, prostate, thymus and spleen.

It is found in the nucleus. In terms of biological role, transcription factor. Has a lower transcription activation potential than HNF4-alpha. The protein is Hepatocyte nuclear factor 4-gamma (HNF4G) of Homo sapiens (Human).